Here is a 391-residue protein sequence, read N- to C-terminus: O-methyltransferase ATR12 (391 aa).

Residues 233 to 234 (GG), Asp-259, and 279 to 280 (DF) each bind S-adenosyl-L-methionine. The Proton acceptor role is filled by His-299.

The protein belongs to the class I-like SAM-binding methyltransferase superfamily. Cation-independent O-methyltransferase family. COMT subfamily.

It participates in mycotoxin biosynthesis. Its function is as follows. O-methyltransferase; part of the core atranone cluster (CAC) which products are predicted to catalyze most or all steps of mycotoxin atranone synthesis, starting from geranylgeranyl pyrophosphate (GGPP). The initial cyclization of GGPP to dolabellane is probably performed by the terpene cyclase ATR13. The Baeyer-Villiger oxidation near the end of the atranone synthesis, which converts atranones D and E to atranones F and G is predicted to be catalyzed by the monooxygenase ATR8. Of the CAC's other predicted gene products, the reducing PKS ATR6 might synthesize a polyketide chain. This polyketide is probably transferred onto the atranone backbone by the polyketide transferase ATR5. Other predicted CAC products include 4 oxygenases (ATR2, ATR3, ATR4, and ATR14), 3 short-chain reductases (ATR7, ATR9, and ATR10), and a methyltransferase (ATR12). These may all be involved in the various steps of atranone biosynthesis, although their specific roles must await experimental determination. This chain is O-methyltransferase ATR12, found in Stachybotrys chlorohalonatus (strain IBT 40285).